A 597-amino-acid chain; its full sequence is HECT-type ubiquitin ligase-interacting protein creD (597 aa).

3 disordered regions span residues glutamate 375–serine 398, alanine 439–proline 492, and serine 576–alanine 597. Over residues glycine 452–alanine 466 the composition is skewed to polar residues. A compositionally biased stretch (basic and acidic residues) spans leucine 472 to aspartate 483.

It belongs to the arrestin family. In terms of assembly, interacts with hulA.

Component of the regulatory network controlling carbon source utilization through ubiquitination and deubiquitination involving creA, creB, creC, creD and acrB. May be involved in signaling by recognizing appropriately phosphorylated substrates via its arrestin domains and then recruit a HECT-type ubiquitin ligase such as hulA, leading to ubiquitination of the substrate, providing a link between ubiquitination and phosphorylation in protein regulation and stability. This is HECT-type ubiquitin ligase-interacting protein creD (creD) from Emericella nidulans (strain FGSC A4 / ATCC 38163 / CBS 112.46 / NRRL 194 / M139) (Aspergillus nidulans).